Here is a 298-residue protein sequence, read N- to C-terminus: Zinc import ATP-binding protein ZnuC (298 aa).

In terms of domain architecture, ABC transporter spans 17 to 232 (IELRNAGVYR…PEYVRLFGSR (216 aa)). 49-56 (GPNGAGKS) serves as a coordination point for ATP. The segment at 273–298 (RGHCHVEDGHHHDHEHHHHEGGQPRA) is disordered. Positions 276-298 (CHVEDGHHHDHEHHHHEGGQPRA) are enriched in basic and acidic residues.

The protein belongs to the ABC transporter superfamily. Zinc importer (TC 3.A.1.15.5) family. In terms of assembly, the complex is composed of two ATP-binding proteins (ZnuC), two transmembrane proteins (ZnuB) and a solute-binding protein (ZnuA).

It localises to the cell inner membrane. It catalyses the reaction Zn(2+)(out) + ATP(in) + H2O(in) = Zn(2+)(in) + ADP(in) + phosphate(in) + H(+)(in). In terms of biological role, part of the ABC transporter complex ZnuABC involved in zinc import. Responsible for energy coupling to the transport system. This chain is Zinc import ATP-binding protein ZnuC, found in Brucella abortus (strain 2308).